We begin with the raw amino-acid sequence, 722 residues long: Bifunctional UDP-N-acetylglucosamine 2-epimerase/N-acetylmannosamine kinase (722 aa).

UDP is bound by residues R19, S23, R113, H220, and N253. CMP-N-acetyl-beta-neuraminate contacts are provided by K259, E271, K280, and H281. Residues V282, S301, S302, E307, and R321 each coordinate UDP. Positions 406–722 (TLSALAVDLG…VLDYTTRRIH (317 aa)) are N-acetylmannosamine kinase. D413 lines the Mg(2+) pocket. Position 416 (G416) interacts with an N-acyl-D-mannosamine 6-phosphate. ADP is bound by residues T417, N418, and R420. Positions 476, 477, 489, 516, 517, and 545 each coordinate an N-acyl-D-mannosamine 6-phosphate. Residues G476, R477, T489, N516, and D517 each coordinate an N-acyl-D-mannosamine. Residue D517 is part of the active site. The an N-acyl-D-mannosamine site is built by E566 and H569. H569 provides a ligand contact to an N-acyl-D-mannosamine 6-phosphate. Zn(2+)-binding residues include H569, C579, C581, and C586. E588 contacts an N-acyl-D-mannosamine 6-phosphate. E588 lines the an N-acyl-D-mannosamine pocket.

This sequence in the N-terminal section; belongs to the UDP-N-acetylglucosamine 2-epimerase family. The protein in the C-terminal section; belongs to the ROK (NagC/XylR) family. In terms of assembly, homodimer. Homotetramer. Homohexamer. The hexameric form exhibits both enzyme activities, whereas the dimeric form only catalyzes the phosphorylation of N-acyl-D-mannosamine. Post-translationally, phosphorylated. Phosphorylation by PKC activates the UDP-N-acetylglucosamine 2-epimerase activity. Widely expressed. Highest expression in liver. Also found at high levels in lung, brain and kidney.

The protein resides in the cytoplasm. Its subcellular location is the cytosol. The catalysed reaction is UDP-N-acetyl-alpha-D-glucosamine + H2O = aldehydo-N-acetyl-D-mannosamine + UDP + H(+). It carries out the reaction an N-acyl-D-mannosamine + ATP = an N-acyl-D-mannosamine 6-phosphate + ADP + H(+). The protein operates within amino-sugar metabolism; N-acetylneuraminate biosynthesis. The UDP-N-acetylglucosamine 2-epimerase activity, in contrast to the N-acetylmannosamine kinase activity, exhibits allosteric regulation by cytidine monophosphate-N-acetylneuraminic acid (CMP-Neu5Ac), the end product of neuraminic acid biosynthesis. Moreover, the activity is contingent upon the oligomeric state of the enzyme. The monomeric form is inactive, while the dimeric form selectively catalyzes the phosphorylation of N-acetylmannosamine. The hexameric form, on the other hand, demonstrates full proficiency in both enzyme activities. Furthermore, the UDP-N-acetylglucosamine 2-epimerase activity is increased by PKC-mediated phosphorylation. Functionally, bifunctional enzyme that possesses both UDP-N-acetylglucosamine 2-epimerase and N-acetylmannosamine kinase activities, and serves as the initiator of the biosynthetic pathway leading to the production of N-acetylneuraminic acid (NeuAc), a critical precursor in the synthesis of sialic acids. By catalyzing this pivotal and rate-limiting step in sialic acid biosynthesis, this enzyme assumes a pivotal role in governing the regulation of cell surface sialylation, playing a role in embryonic angiogenesis. Sialic acids represent a category of negatively charged sugars that reside on the surface of cells as terminal components of glycoconjugates and mediate important functions in various cellular processes, including cell adhesion, signal transduction, and cellular recognition. In Mus musculus (Mouse), this protein is Bifunctional UDP-N-acetylglucosamine 2-epimerase/N-acetylmannosamine kinase.